A 595-amino-acid polypeptide reads, in one-letter code: Probable L-gulonolactone oxidase 1 (595 aa).

The signal sequence occupies residues 1-18 (MAFWLSLIFFCFCTFASS). The 183-residue stretch at 47–229 (SICEAAKVEY…SQVTFQLQPM (183 aa)) folds into the FAD-binding PCMH-type domain.

It belongs to the oxygen-dependent FAD-linked oxidoreductase family. FAD is required as a cofactor.

It catalyses the reaction L-gulono-1,4-lactone + O2 = L-ascorbate + H2O2 + H(+). It participates in cofactor biosynthesis; L-ascorbate biosynthesis. May be involved in the biosynthesis of ascorbic acid. This chain is Probable L-gulonolactone oxidase 1, found in Arabidopsis thaliana (Mouse-ear cress).